We begin with the raw amino-acid sequence, 70 residues long: Large ribosomal subunit protein eL43 (70 aa).

The Zn(2+) site is built by Cys36, Cys39, Cys55, and Cys58. The C4-type zinc-finger motif lies at 36 to 58 (CPYCKTTGKVIRLASGIWYCKKC).

It belongs to the eukaryotic ribosomal protein eL43 family. Putative zinc-binding subfamily. Part of the 50S ribosomal subunit. Zn(2+) is required as a cofactor.

In terms of biological role, binds to the 23S rRNA. This chain is Large ribosomal subunit protein eL43, found in Saccharolobus solfataricus (strain ATCC 35092 / DSM 1617 / JCM 11322 / P2) (Sulfolobus solfataricus).